An 81-amino-acid chain; its full sequence is Photosystem I iron-sulfur center (81 aa).

4Fe-4S ferredoxin-type domains follow at residues 2 to 31 and 39 to 68; these read SHSVKIYDTCIGCTQCVRACPTDVLEMIPW and IAPAPRTEDCVGCKRCESACPTDFLSVRVY. Residues Cys11, Cys14, Cys17, Cys21, Cys48, Cys51, Cys54, and Cys58 each contribute to the [4Fe-4S] cluster site.

In terms of assembly, the eukaryotic PSI reaction center is composed of at least 11 subunits. [4Fe-4S] cluster is required as a cofactor.

Its subcellular location is the plastid. It is found in the chloroplast thylakoid membrane. The catalysed reaction is reduced [plastocyanin] + hnu + oxidized [2Fe-2S]-[ferredoxin] = oxidized [plastocyanin] + reduced [2Fe-2S]-[ferredoxin]. Its function is as follows. Apoprotein for the two 4Fe-4S centers FA and FB of photosystem I (PSI); essential for photochemical activity. FB is the terminal electron acceptor of PSI, donating electrons to ferredoxin. The C-terminus interacts with PsaA/B/D and helps assemble the protein into the PSI complex. Required for binding of PsaD and PsaE to PSI. PSI is a plastocyanin-ferredoxin oxidoreductase, converting photonic excitation into a charge separation, which transfers an electron from the donor P700 chlorophyll pair to the spectroscopically characterized acceptors A0, A1, FX, FA and FB in turn. The sequence is that of Photosystem I iron-sulfur center from Drimys granadensis.